Here is a 238-residue protein sequence, read N- to C-terminus: 2,3,4,5-tetrahydropyridine-2,6-dicarboxylate N-acetyltransferase (238 aa).

This sequence belongs to the transferase hexapeptide repeat family. DapH subfamily.

It carries out the reaction (S)-2,3,4,5-tetrahydrodipicolinate + acetyl-CoA + H2O = L-2-acetamido-6-oxoheptanedioate + CoA. Its pathway is amino-acid biosynthesis; L-lysine biosynthesis via DAP pathway; LL-2,6-diaminopimelate from (S)-tetrahydrodipicolinate (acetylase route): step 1/3. Its function is as follows. Catalyzes the transfer of an acetyl group from acetyl-CoA to tetrahydrodipicolinate. This is 2,3,4,5-tetrahydropyridine-2,6-dicarboxylate N-acetyltransferase from Clostridioides difficile (strain 630) (Peptoclostridium difficile).